Reading from the N-terminus, the 450-residue chain is Serine/threonine-protein kinase-transforming protein Rmil (450 aa).

2 stretches are compositionally biased toward basic and acidic residues: residues 1–14 and 49–73; these read MEAVIKDLIRDQGV and QRERKSSSSSEDRNRMKTLGRRDSS. The segment at 1-80 is disordered; it reads MEAVIKDLIR…DSSDDWEIPD (80 aa). The region spanning 83-343 is the Protein kinase domain; that stretch reads ITVGQRIGSG…PQILASIELL (261 aa). ATP-binding positions include 89–97 and Lys109; that span reads IGSGSFGTV. The active-site Proton acceptor is Asp202.

Belongs to the protein kinase superfamily. TKL Ser/Thr protein kinase family. RAF subfamily.

It carries out the reaction L-seryl-[protein] + ATP = O-phospho-L-seryl-[protein] + ADP + H(+). The enzyme catalyses L-threonyl-[protein] + ATP = O-phospho-L-threonyl-[protein] + ADP + H(+). The polypeptide is Serine/threonine-protein kinase-transforming protein Rmil (V-RMIL) (Avian rous-associated virus type 1).